The chain runs to 1077 residues: Teashirt homolog 1-B (1077 aa).

Disordered stretches follow at residues 1–110 and 142–179; these read MPRR…NASY and NEKASPTTNTDKSSKSEASGPTSDPGTPTTITSSSCTN. A compositionally biased stretch (acidic residues) spans 26-36; the sequence is TEEDNLEDDGL. Positions 56–69 are enriched in polar residues; that stretch reads TQSYQNSPISSATN. Low complexity predominate over residues 160-179; the sequence is SGPTSDPGTPTTITSSSCTN. Residues 248 to 272 form a C2H2-type 1 zinc finger; it reads FRCKDCSAAYDTLVELTVHMNETGH. The segment covering 274–286 has biased composition (basic and acidic residues); the sequence is RDDNRDREAERTK. Positions 274-300 are disordered; it reads RDDNRDREAERTKRWSKPRKRSLMEME. A C2H2-type 2 zinc finger spans residues 309–333; the sequence is LKCMYCGHSFESLQDLSVHMIKTKH. The segment at 362–394 is disordered; sequence ALPDSPEQAGISPGASVSESAKDPKAANPYVTP. The C2H2-type 3 zinc-finger motif lies at 418-442; that stretch reads LKCMECGSSHDTLQQLTAHMMVTGH. Disordered regions lie at residues 473–530 and 849–873; these read PPTT…KIEP and GRLTPKSSTPSTVSEKSDADGSSFE. Basic and acidic residues predominate over residues 497–529; sequence HSEEKKDPEKEKVNIGEVEKKIKEENEDPEKIE. Residues 853–862 are compositionally biased toward polar residues; the sequence is PKSSTPSTVS. The segment at residues 885–955 is a DNA-binding region (homeobox); the sequence is RKGRQSNWNP…NVKYQLRRTG (71 aa). 2 consecutive C2H2-type zinc fingers follow at residues 970–992 and 1037–1060; these read FFCNDCASQFRTASTYIGHLETH and FQCKLCNRTFASKHAVKLHLSKTH.

The protein belongs to the teashirt C2H2-type zinc-finger protein family.

Its subcellular location is the nucleus. Probable transcriptional regulator involved in developmental processes. May act as a transcriptional repressor (Potential). Involved in two major neuronal regionalization processes: primary anteroposterior (AP) axis patterning of the CNS and segmentation of the cranial neuronal crest (CNS) development. The protein is Teashirt homolog 1-B (tshz1-b) of Xenopus laevis (African clawed frog).